A 192-amino-acid chain; its full sequence is Fe/S biogenesis protein NfuA (192 aa).

[4Fe-4S] cluster-binding residues include cysteine 149 and cysteine 152.

Belongs to the NfuA family. Homodimer. [4Fe-4S] cluster serves as cofactor.

Functionally, involved in iron-sulfur cluster biogenesis. Binds a 4Fe-4S cluster, can transfer this cluster to apoproteins, and thereby intervenes in the maturation of Fe/S proteins. Could also act as a scaffold/chaperone for damaged Fe/S proteins. This is Fe/S biogenesis protein NfuA from Shewanella sediminis (strain HAW-EB3).